A 149-amino-acid chain; its full sequence is 3-dehydroquinate dehydratase (149 aa).

Tyr26 functions as the Proton acceptor in the catalytic mechanism. Residues Asn77, His83, and Asp90 each coordinate substrate. Catalysis depends on His103, which acts as the Proton donor. Residues Leu104 to Ser105 and Arg114 contribute to the substrate site.

The protein belongs to the type-II 3-dehydroquinase family. As to quaternary structure, homododecamer.

It catalyses the reaction 3-dehydroquinate = 3-dehydroshikimate + H2O. It functions in the pathway metabolic intermediate biosynthesis; chorismate biosynthesis; chorismate from D-erythrose 4-phosphate and phosphoenolpyruvate: step 3/7. Its function is as follows. Catalyzes a trans-dehydration via an enolate intermediate. This Vibrio parahaemolyticus serotype O3:K6 (strain RIMD 2210633) protein is 3-dehydroquinate dehydratase.